The sequence spans 1435 residues: Cardiac-enriched FHL2-interacting protein (1435 aa).

4 disordered regions span residues 109 to 176 (EEKY…PPKF), 203 to 234 (SNTHQNSYQPGRKHGEQESSKNPEMACHGSSS), 250 to 270 (FPSPHHKPVTGEPGRGKGTFL), and 291 to 311 (KDTAGTVPESKAPKHYGDTTL). T120 bears the Phosphothreonine mark. The span at 133 to 147 (LRSSNKPVSKVSTLI) shows a compositional bias: polar residues. Positions 149 to 160 (SFDRTESQRCES) are enriched in basic and acidic residues. Phosphoserine is present on S323. Disordered regions lie at residues 362–592 (EGKA…LTLS), 609–772 (AERS…EKEN), 795–847 (SQGE…SPSS), 1007–1108 (PEGD…ARVT), 1138–1261 (SPRG…PGGP), and 1363–1435 (QGPR…EGIS). Basic and acidic residues predominate over residues 389–402 (KGKESLQDTLEEKT). At S470 the chain carries Phosphoserine. Composition is skewed to basic and acidic residues over residues 479 to 493 (QEKEPSECQSRDSYK), 522 to 535 (VLDEKTRGKVDGKQ), 609 to 620 (AERSSYENKEVE), and 650 to 667 (CNRDPEPGGATEKMKTHQ). Residues 668–679 (LENGLSRSVSQE) show a composition bias toward polar residues. Positions 727-741 (KFSTSSSDQSFASFD) are enriched in low complexity. The span at 751–772 (NQREDRRKDVSAGDSQKDEKEN) shows a compositional bias: basic and acidic residues. S816 bears the Phosphoserine mark. Over residues 831 to 847 (KGTTFSQAKDLTPSPSS) the composition is skewed to polar residues. Low complexity predominate over residues 1055–1066 (NSPNPGSPGESS). A compositionally biased stretch (polar residues) spans 1067–1082 (ACSPAASNIWEESSQA). A compositionally biased stretch (low complexity) spans 1083–1093 (PGGPELLPEEP). The span at 1094 to 1105 (NQASPWASSSPA) shows a compositional bias: polar residues. Over residues 1182-1193 (RRAKKLASKRRK) the composition is skewed to basic residues. A compositionally biased stretch (basic and acidic residues) spans 1194-1211 (TDQAQEKHGESQEGKPCP). The segment covering 1424–1435 (DDLEDFATEGIS) has biased composition (acidic residues).

Interacts with FHL2. As to expression, expressed in the heart and skeletal muscle.

It is found in the cytoplasm. It localises to the myofibril. The protein localises to the sarcomere. The protein resides in the z line. Its function is as follows. Plays an important role in cardiomyocyte hypertrophy via activation of the calcineurin/NFAT signaling pathway. This is Cardiac-enriched FHL2-interacting protein from Homo sapiens (Human).